The following is a 202-amino-acid chain: Diadenylate cyclase (202 aa).

A helical transmembrane segment spans residues 6-26; sequence VFSVIILVLLFLILALTLLFV. Positions 29–185 constitute a DAC domain; the sequence is NKRTRSFVIR…RGVIKTLSSN (157 aa).

It belongs to the adenylate cyclase family. DacB/CdaS subfamily. Probably oligomerizes.

It localises to the cell membrane. The enzyme catalyses 2 ATP = 3',3'-c-di-AMP + 2 diphosphate. Its function is as follows. Catalyzes the condensation of 2 ATP molecules into cyclic di-AMP (c-di-AMP), a second messenger used to regulate differing processes in different bacteria. This Mycoplasma pneumoniae (strain ATCC 29342 / M129 / Subtype 1) (Mycoplasmoides pneumoniae) protein is Diadenylate cyclase.